The primary structure comprises 121 residues: Cell division protein FtsB (121 aa).

At 1–6 (MRNWRW) the chain is on the cytoplasmic side. The chain crosses the membrane as a helical span at residues 7-24 (LLLVLAVLLAWLQYRFWF). Residues 25–121 (GPGNSGEVMM…PEPIDPVDHP (97 aa)) lie on the Periplasmic side of the membrane. Residues 31-66 (EVMMLEAQVAHQTQDNEGLRQRNQALAAEVKDLKDG) adopt a coiled-coil conformation. The segment at 92-121 (EDAPLPAPASPEAPAPPQQAPEPIDPVDHP) is disordered. A compositionally biased stretch (pro residues) spans 96 to 115 (LPAPASPEAPAPPQQAPEPI).

This sequence belongs to the FtsB family. As to quaternary structure, part of a complex composed of FtsB, FtsL and FtsQ.

It localises to the cell inner membrane. Essential cell division protein. May link together the upstream cell division proteins, which are predominantly cytoplasmic, with the downstream cell division proteins, which are predominantly periplasmic. This is Cell division protein FtsB from Xanthomonas euvesicatoria pv. vesicatoria (strain 85-10) (Xanthomonas campestris pv. vesicatoria).